A 163-amino-acid chain; its full sequence is Large ribosomal subunit protein uL11 (163 aa).

This sequence belongs to the universal ribosomal protein uL11 family. In terms of assembly, part of the ribosomal stalk of the 50S ribosomal subunit. Interacts with L10 and the large rRNA to form the base of the stalk. L10 forms an elongated spine to which L12 dimers bind in a sequential fashion forming a multimeric L10(L12)X complex.

Its function is as follows. Forms part of the ribosomal stalk which helps the ribosome interact with GTP-bound translation factors. The sequence is that of Large ribosomal subunit protein uL11 from Thermococcus onnurineus (strain NA1).